A 969-amino-acid chain; its full sequence is Proprotein convertase subtilisin/kexin type 6 (969 aa).

Residues 1 to 16 (MPPRAPPAPGPRPPPR) show a composition bias toward pro residues. Residues 1–39 (MPPRAPPAPGPRPPPRAAAATDTAAGAGGAGGAGGAGGP) are disordered. An N-terminal signal peptide occupies residues 1 to 63 (MPPRAPPAPG…LLALPAACSA (63 aa)). The span at 26–39 (GAGGAGGAGGAGGP) shows a compositional bias: gly residues. Residues 64–149 (PPPRPVYTNH…QQEVKRRVKR (86 aa)) constitute a propeptide that is removed on maturation. Residues 168 to 487 (MWYLHCGDKN…FGLVDAEALV (320 aa)) enclose the Peptidase S8 domain. Active-site charge relay system residues include Asp-205 and His-246. Asn-259 carries N-linked (GlcNAc...) asparagine glycosylation. Ser-420 acts as the Charge relay system in catalysis. Positions 495–635 (AVPSQHMCVA…SLILYGTAEH (141 aa)) constitute a P/Homo B domain. The Cell attachment site signature appears at 553–555 (RGD). Residues 658-683 (EPPKAALSPSQVEVPEDEEDYTAQST) are disordered. 5 FU repeats span residues 692–739 (TSVC…GYFG), 743–790 (ARRC…GFYA), 794–838 (QKNC…GTYF), 842–887 (LIRC…GFYP), and 895–943 (HKVC…ETFC). The interval 695-930 (CHPECGDKGC…GFTQLGTSCI (236 aa)) is CRM (Cys-rich motif). 2 N-linked (GlcNAc...) asparagine glycosylation sites follow: Asn-914 and Asn-932. Residues 931–969 (TNHTCSNADETFCEMVKSNRLCERKLFIQFCCRTCLLAG) enclose the PLAC domain.

It belongs to the peptidase S8 family. In terms of assembly, the PACE4A-I precursor protein seems to exist in the reticulum endoplasmic as both a monomer and a dimer-sized complex whereas mature PACE4A-I exists only as a monomer, suggesting that propeptide cleavage affects its tertiary or quaternary structure. Interacts (immature form including the propeptide) with RCN3; probably involved in the maturation and the secretion of PCSK6. Ca(2+) is required as a cofactor. In terms of tissue distribution, each PACE4 isoform exhibits a unique restricted distribution. Isoform PACE4A-I is expressed in heart, brain, placenta, lung, skeletal muscle, kidney, pancreas, but at comparatively higher levels in the liver. Isoform PACE4A-II is at least expressed in placenta. Isoform PACE4B was only found in the embryonic kidney cell line from which it was isolated. Isoform PACE4C and isoform PACE4D are expressed in placenta. Isoform PACE4E-I is expressed in cerebellum, placenta and pituitary. Isoform PACE4E-II is at least present in cerebellum.

The protein localises to the secreted. It localises to the endoplasmic reticulum. The protein resides in the endomembrane system. In terms of biological role, serine endoprotease that processes various proproteins by cleavage at paired basic amino acids, recognizing the RXXX[KR]R consensus motif. Likely functions in the constitutive secretory pathway, with unique restricted distribution in both neuroendocrine and non-neuroendocrine tissues. The sequence is that of Proprotein convertase subtilisin/kexin type 6 (PCSK6) from Homo sapiens (Human).